The sequence spans 128 residues: Large ribosomal subunit protein bL19 (128 aa).

Belongs to the bacterial ribosomal protein bL19 family.

This protein is located at the 30S-50S ribosomal subunit interface and may play a role in the structure and function of the aminoacyl-tRNA binding site. The protein is Large ribosomal subunit protein bL19 of Paracidovorax citrulli (strain AAC00-1) (Acidovorax citrulli).